Here is a 385-residue protein sequence, read N- to C-terminus: Actin-2 (385 aa).

It belongs to the actin family. ARP1 subfamily.

It localises to the cytoplasm. The protein localises to the cytoskeleton. The protein is Actin-2 of Pneumocystis carinii.